We begin with the raw amino-acid sequence, 167 residues long: Putative N-acetylgalactosamine-6-phosphate deacetylase (167 aa).

It belongs to the metallo-dependent hydrolases superfamily. NagA family.

The catalysed reaction is N-acetyl-D-galactosamine 6-phosphate + H2O = D-galactosamine 6-phosphate + acetate. In Escherichia coli (strain K12), this protein is Putative N-acetylgalactosamine-6-phosphate deacetylase (agaA).